The primary structure comprises 397 residues: Elongation factor Tu-1 (397 aa).

Positions Lys-10–Glu-206 constitute a tr-type G domain. The G1 stretch occupies residues Gly-19–Thr-26. Residue Gly-19 to Thr-26 participates in GTP binding. Thr-26 serves as a coordination point for Mg(2+). A G2 region spans residues Gly-62–Ser-66. Residues Asp-83 to Gly-86 are G3. GTP-binding positions include Asp-83–His-87 and Asn-138–Asp-141. The interval Asn-138–Asp-141 is G4. Positions Ser-176 to Leu-178 are G5. Residue Thr-386 is modified to Phosphothreonine.

It belongs to the TRAFAC class translation factor GTPase superfamily. Classic translation factor GTPase family. EF-Tu/EF-1A subfamily. In terms of assembly, monomer. Phosphorylated on threonine and serine.

The protein resides in the cytoplasm. The catalysed reaction is GTP + H2O = GDP + phosphate + H(+). Functionally, GTP hydrolase that promotes the GTP-dependent binding of aminoacyl-tRNA to the A-site of ribosomes during protein biosynthesis. In Streptomyces collinus, this protein is Elongation factor Tu-1.